The following is a 145-amino-acid chain: Early nodulin-like protein 21 (145 aa).

Positions 1–17 are cleaved as a signal peptide; that stretch reads MFLWLVIVLTISASVSS. Positions 18–116 constitute a Phytocyanin domain; it reads YEHKLNWVVP…GQKMIVEVIS (99 aa). N-linked (GlcNAc...) asparagine glycosylation is found at asparagine 30 and asparagine 71. Cysteine 70 and cysteine 104 form a disulfide bridge. The GPI-anchor amidated serine moiety is linked to residue serine 116. Positions 117–145 are cleaved as a propeptide — removed in mature form; sequence RDHTTTSAAPPAAFAVLLCFFSLSLYFVA.

This sequence belongs to the early nodulin-like (ENODL) family. As to expression, mostly expressed in leaves and flowers, and, to a lower extent, in roots and stems, but barely in seedlings and seeds.

The protein localises to the cell membrane. May act as a carbohydrate transporter. The chain is Early nodulin-like protein 21 from Arabidopsis thaliana (Mouse-ear cress).